The sequence spans 358 residues: Dual-specificity RNA methyltransferase RlmN (358 aa).

Residue Glu86 is the Proton acceptor of the active site. In terms of domain architecture, Radical SAM core spans 105 to 338 (RHKRYTICVS…CTIRQSKGLD (234 aa)). Cysteines 112 and 343 form a disulfide. [4Fe-4S] cluster contacts are provided by Cys119, Cys123, and Cys126. Residues 169–170 (GE), Ser201, 224–226 (SLH), and Asn300 contribute to the S-adenosyl-L-methionine site. Cys343 acts as the S-methylcysteine intermediate in catalysis.

The protein belongs to the radical SAM superfamily. RlmN family. The cofactor is [4Fe-4S] cluster.

Its subcellular location is the cytoplasm. It carries out the reaction adenosine(2503) in 23S rRNA + 2 reduced [2Fe-2S]-[ferredoxin] + 2 S-adenosyl-L-methionine = 2-methyladenosine(2503) in 23S rRNA + 5'-deoxyadenosine + L-methionine + 2 oxidized [2Fe-2S]-[ferredoxin] + S-adenosyl-L-homocysteine. The enzyme catalyses adenosine(37) in tRNA + 2 reduced [2Fe-2S]-[ferredoxin] + 2 S-adenosyl-L-methionine = 2-methyladenosine(37) in tRNA + 5'-deoxyadenosine + L-methionine + 2 oxidized [2Fe-2S]-[ferredoxin] + S-adenosyl-L-homocysteine. Functionally, specifically methylates position 2 of adenine 2503 in 23S rRNA and position 2 of adenine 37 in tRNAs. m2A2503 modification seems to play a crucial role in the proofreading step occurring at the peptidyl transferase center and thus would serve to optimize ribosomal fidelity. This chain is Dual-specificity RNA methyltransferase RlmN, found in Campylobacter hominis (strain ATCC BAA-381 / DSM 21671 / CCUG 45161 / LMG 19568 / NCTC 13146 / CH001A).